Here is a 60-residue protein sequence, read N- to C-terminus: Cytotoxin 2a (60 aa).

4 cysteine pairs are disulfide-bonded: cysteine 3/cysteine 21, cysteine 14/cysteine 38, cysteine 42/cysteine 53, and cysteine 54/cysteine 59.

The protein belongs to the three-finger toxin family. Short-chain subfamily. Type IA cytotoxin sub-subfamily. As to quaternary structure, monomer in solution; Homodimer and oligomer in the presence of negatively charged lipids forming a pore with a size ranging between 20 and 30 Angstroms. As to expression, expressed by the venom gland.

The protein resides in the secreted. It localises to the target cell membrane. Shows cytolytic activity on many different cells by forming pore in lipid membranes. In vivo, increases heart rate or kills the animal by cardiac arrest. In addition, it binds to heparin with high affinity, interacts with Kv channel-interacting protein 1 (KCNIP1) in a calcium-independent manner, and binds to integrin alpha-V/beta-3 (ITGAV/ITGB3) with moderate affinity. Preferentially binds acidic phospholipids like phosphatidylserine, phosphatidic acid and phosphatidyl glycerol. Has hemolytic activity towards human erythrocytes (EC(50)=1.024 uM) and cytolytic activity towards various cell lines. The protein is Cytotoxin 2a of Naja naja (Indian cobra).